We begin with the raw amino-acid sequence, 374 residues long: Erythronate-4-phosphate dehydrogenase (374 aa).

Residues Ser-45 and Thr-67 each coordinate substrate. Position 147 (Asp-147) interacts with NAD(+). Residue Arg-208 is part of the active site. Residue Asp-232 coordinates NAD(+). Glu-237 is an active-site residue. His-254 (proton donor) is an active-site residue. NAD(+) is bound at residue Gly-257.

It belongs to the D-isomer specific 2-hydroxyacid dehydrogenase family. PdxB subfamily. As to quaternary structure, homodimer.

Its subcellular location is the cytoplasm. The catalysed reaction is 4-phospho-D-erythronate + NAD(+) = (R)-3-hydroxy-2-oxo-4-phosphooxybutanoate + NADH + H(+). It functions in the pathway cofactor biosynthesis; pyridoxine 5'-phosphate biosynthesis; pyridoxine 5'-phosphate from D-erythrose 4-phosphate: step 2/5. In terms of biological role, catalyzes the oxidation of erythronate-4-phosphate to 3-hydroxy-2-oxo-4-phosphonooxybutanoate. In Pseudoalteromonas atlantica (strain T6c / ATCC BAA-1087), this protein is Erythronate-4-phosphate dehydrogenase.